The sequence spans 304 residues: Probable 5-dehydro-4-deoxyglucarate dehydratase (304 aa).

The protein belongs to the DapA family.

It catalyses the reaction 5-dehydro-4-deoxy-D-glucarate + H(+) = 2,5-dioxopentanoate + CO2 + H2O. The protein operates within carbohydrate acid metabolism; D-glucarate degradation; 2,5-dioxopentanoate from D-glucarate: step 2/2. In Methylobacterium radiotolerans (strain ATCC 27329 / DSM 1819 / JCM 2831 / NBRC 15690 / NCIMB 10815 / 0-1), this protein is Probable 5-dehydro-4-deoxyglucarate dehydratase.